The following is a 98-amino-acid chain: MPFIYINTALAYSMSLLGLLIYRSHLMSSLLCLEGMMLSLFIMMTTMTLNMHLMLMYMLPIILLVFAACEAAVGLALLILISNLYGLDYVQNLNLLQC.

Helical transmembrane passes span 1 to 21 (MPFI…GLLI), 29 to 49 (SLLC…TMTL), and 61 to 81 (IILL…LILI).

It belongs to the complex I subunit 4L family. In terms of assembly, core subunit of respiratory chain NADH dehydrogenase (Complex I) which is composed of 45 different subunits.

The protein localises to the mitochondrion inner membrane. It catalyses the reaction a ubiquinone + NADH + 5 H(+)(in) = a ubiquinol + NAD(+) + 4 H(+)(out). In terms of biological role, core subunit of the mitochondrial membrane respiratory chain NADH dehydrogenase (Complex I) which catalyzes electron transfer from NADH through the respiratory chain, using ubiquinone as an electron acceptor. Part of the enzyme membrane arm which is embedded in the lipid bilayer and involved in proton translocation. This chain is NADH-ubiquinone oxidoreductase chain 4L (MT-ND4L), found in Cebus albifrons (White-fronted capuchin).